The following is a 349-amino-acid chain: Probable trehalose-phosphate phosphatase H (349 aa).

The protein belongs to the trehalose phosphatase family. A divalent metal cation is required as a cofactor.

It catalyses the reaction alpha,alpha-trehalose 6-phosphate + H2O = alpha,alpha-trehalose + phosphate. It functions in the pathway glycan biosynthesis; trehalose biosynthesis. Removes the phosphate from trehalose 6-phosphate to produce free trehalose. Trehalose accumulation in plant may improve abiotic stress tolerance. In Arabidopsis thaliana (Mouse-ear cress), this protein is Probable trehalose-phosphate phosphatase H (TPPH).